Consider the following 132-residue polypeptide: Small ribosomal subunit protein uS8 (132 aa).

Belongs to the universal ribosomal protein uS8 family. Part of the 30S ribosomal subunit. Contacts proteins S5 and S12.

One of the primary rRNA binding proteins, it binds directly to 16S rRNA central domain where it helps coordinate assembly of the platform of the 30S subunit. This is Small ribosomal subunit protein uS8 from Mycolicibacterium smegmatis (strain ATCC 700084 / mc(2)155) (Mycobacterium smegmatis).